The following is a 151-amino-acid chain: Glutamate mutase sigma subunit 1 (151 aa).

Residues 7-140 (PRTVILGVIG…EMLREDLQLT (134 aa)) form the B12-binding domain. Adenosylcob(III)alamin is bound by residues 17-21 (SDAHV), H20, 65-67 (SSL), and 96-100 (NLAVG).

It belongs to the methylaspartate mutase GlmS subunit family. As to quaternary structure, heterotetramer composed of 2 epsilon subunits (GlmE) and 2 sigma subunits (GlmS). GlmE exists as a homodimer and GlmS as a monomer. The cofactor is adenosylcob(III)alamin.

It carries out the reaction (2S,3S)-3-methyl-L-aspartate = L-glutamate. It participates in amino-acid degradation; L-glutamate degradation via mesaconate pathway; acetate and pyruvate from L-glutamate: step 1/4. In terms of biological role, catalyzes the carbon skeleton rearrangement of L-glutamate to L-threo-3-methylaspartate ((2S,3S)-3-methylaspartate). This chain is Glutamate mutase sigma subunit 1, found in Haloarcula marismortui (strain ATCC 43049 / DSM 3752 / JCM 8966 / VKM B-1809) (Halobacterium marismortui).